A 418-amino-acid chain; its full sequence is Somatostatin receptor type 3 (418 aa).

Residues 1–21 (MDMLHPSSVSTTSEPENASSA) form a disordered region. Residues 1–43 (MDMLHPSSVSTTSEPENASSAWPPDATLGNVSAGPSPAGLAVS) are Extracellular-facing. Positions 7-20 (SSVSTTSEPENASS) are enriched in polar residues. Asn17 and Asn30 each carry an N-linked (GlcNAc...) asparagine glycan. The chain crosses the membrane as a helical span at residues 44 to 69 (GVLIPLVYLVVCVVGLLGNSLVIYVV). At 70–79 (LRHTASPSVT) the chain is on the cytoplasmic side. Residues 80 to 101 (NVYILNLALADELFMLGLPFLA) form a helical membrane-spanning segment. Residues 102 to 116 (AQNALSYWPFGSLMC) are Extracellular-facing. The cysteines at positions 116 and 191 are disulfide-linked. The helical transmembrane segment at 117-138 (RLVMAVDGINQFTSIFCLTVMS) threads the bilayer. At 139-161 (VDRYLAVVHPTRSARWRTAPVAR) the chain is on the cytoplasmic side. Residues 162–181 (TVSAAVWVASAVVVLPVVVF) traverse the membrane as a helical segment. The Extracellular segment spans residues 182-205 (SGVPRGMSTCHMQWPEPAAAWRAG). The chain crosses the membrane as a helical span at residues 206–231 (FIIYTAALGFFGPLLVICLCYLLIVV). At 232–257 (KVRSAGRRVWAPSCQRRRRSERRVTR) the chain is on the cytoplasmic side. A helical membrane pass occupies residues 258 to 279 (MVVAVVALFVLCWMPFYVLNIV). Residues 280 to 293 (NVVCPLPEEPAFFG) lie on the Extracellular side of the membrane. The helical transmembrane segment at 294 to 316 (LYFLVVALPYANSCANPILYGFL) threads the bilayer. Residues 317 to 418 (SYRFKQGFRR…KSSTMRISYL (102 aa)) lie on the Cytoplasmic side of the membrane. 2 positions are modified to phosphoserine: Ser332 and Ser337. The disordered stretch occupies residues 335-418 (VRSQEPTVGP…KSSTMRISYL (84 aa)). Thr348 carries the phosphothreonine modification. Acidic residues predominate over residues 348–360 (TEEEDEEEEDGEE). The segment covering 361-371 (SREGGKGKEMN) has biased composition (basic and acidic residues). 2 stretches are compositionally biased toward polar residues: residues 373-385 (RVSQ…TSGQ) and 395-418 (KEQQ…ISYL).

This sequence belongs to the G-protein coupled receptor 1 family. As to quaternary structure, homodimer and heterodimer with SSTR2. Heterodimerization with SSTR2 inactivates SSTR3 receptor function. Phosphorylated. Phosphorylation increases upon somatostatin binding. As to expression, brain, pituitary and pancreas.

The protein localises to the cell membrane. In terms of biological role, receptor for somatostatin-14 and -28. This receptor is coupled via pertussis toxin sensitive G proteins to inhibition of adenylyl cyclase. This is Somatostatin receptor type 3 (SSTR3) from Homo sapiens (Human).